The chain runs to 175 residues: Ribosome-binding factor A (175 aa).

A disordered region spans residues 129 to 175; the sequence is GAKPAGEADPYRDRGSADEPSDAGGLVIRTSDGLEAENTGDDYQAED. Residues 162 to 175 show a composition bias toward acidic residues; sequence LEAENTGDDYQAED.

It belongs to the RbfA family. In terms of assembly, monomer. Binds 30S ribosomal subunits, but not 50S ribosomal subunits or 70S ribosomes.

It localises to the cytoplasm. In terms of biological role, one of several proteins that assist in the late maturation steps of the functional core of the 30S ribosomal subunit. Associates with free 30S ribosomal subunits (but not with 30S subunits that are part of 70S ribosomes or polysomes). Required for efficient processing of 16S rRNA. May interact with the 5'-terminal helix region of 16S rRNA. This chain is Ribosome-binding factor A, found in Mycobacterium marinum (strain ATCC BAA-535 / M).